The sequence spans 837 residues: MNKQNQLPLVGVRVADFGQQIAGPAVAMVLADLGATVVHIDPPGGPSWKHPANAILNRNKASLCIDLKTQAGLDQALELIENVDIVIESFRPGVMKRLGIDFVALRESRPELITLSMPGFASNDELHRDWKATEAIVAATSGTFTDMGFNRVLMGLNPSFSPLPLGSSYAISLAASSIALALFEREKTGRGDNIEVPIAAALMEGLSYNSYVVDQLPERYKTMRELEIEHRKSNNIKMDVSYAQLQEYLDPFYRTYVCADGRQFYCVCPSHRNHAERALKVLGIYDELVAEGLPEVKDLHVPISEWDGETSIGVYPLPKKWADLISEKMKKAFLQKTSDEWGVIFGEGQIPGAPHRSTEEWVNSEHCNASGLIVEVEGTEFGTMKQPGPIVWFENESEAMLKPKPQEHVSFEQALARLQSVAKIEKISRPTGQDIQPASGKGWLDGVKILDLTNVIAGPHSTAFMSRFGAEITKLDPVTPLYDPLIGILFTFQTGVGKQSALVNIMTKEGREVFERLVRSVDIVVINAPDRQMKPLGLDQDSLSAINPDVLFCRLDCFGGPRTGSKTNYIGYDDIIQANSGIMSRFGKPETPEEHAHLGTLDVNCGFAAALGMVIALYQKRKTGKVCRVRTSLSAVTNIAQIPFAFDYEGRAPFNEASGREAMGNHALSHFYRTNSGWVFLDSHQGELAKLDAIKGLNGIQQSQDMGQFLRDQLVKESSAYWLKEFAAADIACAEPFSIEYLREHNSRVADQKVGTDLGSYAFSIFPDHPSGHCITQVDPYSIRPREAKIRAVTPTEKFGCSTIKVLQGLGYSESDINDMLEKKIAATGWGREFLPS.

The Nucleophile role is filled by Asp-602.

Belongs to the CoA-transferase III family.

In terms of biological role, dimethyl sulfide (DMS)-producing enzyme. Acts both as a transferase and a lyase: uses acetyl-coenzyme A (acetyl-coA) and dimethylsulfoniopropionate (DMSP) as substrates to produce DMS, acetate and 3-hydroxypropionate-CoA (3HP-CoA). Mediates the CoA-transferase prior to lyase activity. DMS is the principal form by which sulfur is transported from oceans to the atmosphere and is a key component of the ocean sulfur cycle. This is CoA-transferase/lyase DddD from Marinomonas sp. (strain MWYL1).